Here is a 282-residue protein sequence, read N- to C-terminus: Eukaryotic translation initiation factor 3 subunit G (282 aa).

The interval Met-1 to Asn-27 is disordered. Phosphoserine is present on residues Ser-160 and Ser-164. The 79-residue stretch at Ala-202–Pro-280 folds into the RRM domain.

Belongs to the eIF-3 subunit G family. Component of the eukaryotic translation initiation factor 3 (eIF-3) complex. The eIF-3 complex appears to include tif32/eif3a, SPAC25G10.08/eif3b, tif33/eif3c, SPBC4C3.07/eif3f, tif35/eif3g and sum1/eif3i. This set of common subunits may also associate exclusively with either moe1/eif3d and int6/eif3e, or with SPAC821.05/eif3h and SPAC1751.03/eif3m. The eIF-3 complex may also include SPAC3A12.13c/eif3j.

It is found in the cytoplasm. Functionally, RNA-binding component of the eukaryotic translation initiation factor 3 (eIF-3) complex, which is involved in protein synthesis of a specialized repertoire of mRNAs and, together with other initiation factors, stimulates binding of mRNA and methionyl-tRNAi to the 40S ribosome. The eIF-3 complex specifically targets and initiates translation of a subset of mRNAs involved in cell proliferation. This subunit can bind 18S rRNA. The chain is Eukaryotic translation initiation factor 3 subunit G (tif35) from Schizosaccharomyces pombe (strain 972 / ATCC 24843) (Fission yeast).